Reading from the N-terminus, the 254-residue chain is Very-long-chain (3R)-3-hydroxyacyl-CoA dehydratase 2 (254 aa).

An N-acetylalanine modification is found at Ala-2. At 2–41 (AAVAATAAAKGNGGGGGRAGAGDASGTRKKKGPGPLATAY) the chain is on the cytoplasmic side. Positions 11–33 (KGNGGGGGRAGAGDASGTRKKKG) are disordered. The span at 12–21 (GNGGGGGRAG) shows a compositional bias: gly residues. Residues 42-60 (LVIYNVVMTAGWLVIAVGL) traverse the membrane as a helical segment. The Lumenal segment spans residues 61–79 (VRAYLAKGSYHSLYYSIEK). The chain crosses the membrane as a helical span at residues 80 to 97 (PLKFFQTGALLEILHCAI). The Cytoplasmic portion of the chain corresponds to 98–107 (GIVPSSVVLT). A helical membrane pass occupies residues 108 to 125 (SFQVMSRVFLIWAVTHSV). At 126–130 (KEVQS) the chain is on the lumenal side. A helical transmembrane segment spans residues 131–146 (EDSVLLFVIAWTITEI). At 147–169 (IRYSFYTFSLLNHLPYLIKWARY) the chain is on the cytoplasmic side. A helical membrane pass occupies residues 170–187 (TLFIVLYPMGVSGELLTI). Active-site residues include Tyr-176 and Glu-183. The Lumenal portion of the chain corresponds to 188–217 (YAALPFVRQAGLYSISLPNKYNFSFDYYAF). Residues 198-214 (GLYSISLPNKYNFSFDY) are may be involved in interaction with TECR. An N-linked (GlcNAc...) asparagine glycan is attached at Asn-209. The helical transmembrane segment at 218–235 (LILIMISYIPIFPQLYFH) threads the bilayer. Over 236–254 (MIHQRRKILSHTEEHKKFE) the chain is Cytoplasmic.

This sequence belongs to the very long-chain fatty acids dehydratase HACD family. In terms of assembly, may interact with enzymes of the ELO family (including ELOVL1); with those enzymes that mediate condensation, the first of the four steps of the reaction cycle responsible for fatty acids elongation, may be part of a larger fatty acids elongase complex. Interacts with BCAP31. Interacts (via the third lumenal loop) with TECR. As to expression, highly expressed in testis, spleen, prostate, colon and heart, followed by moderate expression in thymus, ovary, small intestine, peripheral blood leukocytes, liver, skeletal muscle and pancreas. Weakly detected in kidney, placenta, brain and lung.

Its subcellular location is the endoplasmic reticulum membrane. The enzyme catalyses a very-long-chain (3R)-3-hydroxyacyl-CoA = a very-long-chain (2E)-enoyl-CoA + H2O. It carries out the reaction (3R)-hydroxyhexadecanoyl-CoA = (2E)-hexadecenoyl-CoA + H2O. The catalysed reaction is (3R)-hydroxyoctadecanoyl-CoA = (2E)-octadecenoyl-CoA + H2O. It catalyses the reaction (3R)-hydroxyeicosanoyl-CoA = (2E)-eicosenoyl-CoA + H2O. The enzyme catalyses (3R)-hydroxydocosanoyl-CoA = (2E)-docosenoyl-CoA + H2O. It carries out the reaction (3R)-hydroxytetracosanoyl-CoA = (2E)-tetracosenoyl-CoA + H2O. The catalysed reaction is (3R)-hydroxyhexacosanoyl-CoA = (2E)-hexacosenoyl-CoA + H2O. It functions in the pathway lipid metabolism; fatty acid biosynthesis. In terms of biological role, catalyzes the third of the very long-chain fatty acids (VLCFA) elongation four-step cycle (condensation, reduction, dehydration, and reduction). This endoplasmic reticulum-elongation process is characterized by the addition of two carbons to the lipid chain through each cycle. This enzyme catalyzes the dehydration of the 3-hydroxyacyl-CoA intermediate into trans-2,3-enoyl-CoA, within each cycle of elongation. Therefore, it participates in the production of various VLCFAs involved in multiple biological processes as precursors of membrane lipids and lipid mediators. This Homo sapiens (Human) protein is Very-long-chain (3R)-3-hydroxyacyl-CoA dehydratase 2.